The chain runs to 417 residues: Voltage-gated ClC-type chloride channel ClcB (417 aa).

11 consecutive transmembrane segments (helical) span residues 5 to 25 (LLIATIIGILAALAVAGFRHA), 54 to 74 (LITPAVGGLAAGALLWGWQKM), 146 to 166 (LWIACGAAAGMASAYHAPLAG), 168 to 188 (LFIAEILFGTLMLASLGPVVI), 190 to 210 (AVVALLTTHLLSGGNALLYTV), 222 to 242 (AMIISTGLVAGVCGPLFMWLM), 258 to 278 (WQLALGGFIVGLLSLLTPAVW), 288 to 308 (FLLSPPLLSVIAGIFICKLLA), 316 to 336 (GAPGGVFTPTLFIGLSIGMLY), 339 to 359 (MWGFWLPGADEMAILLGLTGM), and 380 to 400 (MTGEYRLLPGLLIACVVASVL).

Belongs to the chloride channel (TC 2.A.49) family. ClcB subfamily.

The protein localises to the cell inner membrane. Probably acts as an electrical shunt for an outwardly-directed proton pump that is linked to amino acid decarboxylation, as part of the extreme acid resistance (XAR) response. The polypeptide is Voltage-gated ClC-type chloride channel ClcB (Citrobacter koseri (strain ATCC BAA-895 / CDC 4225-83 / SGSC4696)).